A 971-amino-acid polypeptide reads, in one-letter code: Unconventional myosin-XIX (971 aa).

The tract at residues 1–25 (MSRPLSKNTEREPKQINGHQNNLSN) is disordered. Residues 48–755 (HLYDDLTKVN…MVELLEERRL (708 aa)) enclose the Myosin motor domain. 145–152 (GESGAGKT) serves as a coordination point for ATP. The actin-binding stretch occupies residues 611-633 (LESLMQILHSTTPHYIRCIKPNV). IQ domains lie at 758–787 (ISSK…ATTI) and 780–809 (QSKA…AATV). The tract at residues 826–971 (AAELDDSTED…FNEILLEKTV (146 aa)) is myMOMA region.

It belongs to the TRAFAC class myosin-kinesin ATPase superfamily. Myosin family. Myosin is a hexamer of 2 heavy chains and 4 light chains.

It localises to the mitochondrion outer membrane. Its subcellular location is the cytoplasm. It is found in the cytoskeleton. Actin-based motor molecule with ATPase activity that localizes to the mitochondrion outer membrane. Motor protein that moves towards the plus-end of actin filaments. Required for mitochondrial inheritance during mitosis. May be involved in mitochondrial transport or positioning. The polypeptide is Unconventional myosin-XIX (Xenopus laevis (African clawed frog)).